Here is a 421-residue protein sequence, read N- to C-terminus: Zinc metalloproteinase-disintegrin-like lachestatin-2 (421 aa).

Residues 10–206 (KYVKLVLVAD…DMPQCILEKP (197 aa)) form the Peptidase M12B domain. Cystine bridges form between Cys121–Cys201, Cys161–Cys185, and Cys163–Cys168. His146 is a Zn(2+) binding site. Residue Glu147 is part of the active site. His150 and His156 together coordinate Zn(2+). The Disintegrin domain maps to 214 to 299 (PPVCGNYFVE…AECTDRFQRN (86 aa)). Residues Val216, Asn219, Phe221, Glu223, Glu226, and Asp229 each coordinate Ca(2+). Disulfide bonds link Cys217–Cys246, Cys228–Cys241, Cys230–Cys236, Cys240–Cys263, Cys254–Cys260, Cys259–Cys285, Cys272–Cys292, Cys279–Cys310, Cys303–Cys315, Cys322–Cys372, Cys337–Cys383, Cys350–Cys360, Cys367–Cys409, and Cys403–Cys414. A D/ECD-tripeptide motif is present at residues 278 to 280 (ECD). Positions 280, 281, 283, 294, and 295 each coordinate Ca(2+). N-linked (GlcNAc...) asparagine glycosylation occurs at Asn312.

It belongs to the venom metalloproteinase (M12B) family. P-III subfamily. P-IIIc sub-subfamily. In terms of assembly, homodimer; disulfide-linked. Zn(2+) is required as a cofactor. As to expression, expressed by the venom gland.

The protein localises to the secreted. Snake venom zinc metalloprotease that induces apoptosis in vascular endothelial cells (VEC), without degrading the extracellular matrix (it cannot cleave collagen) or inhibiting adhesion of VEC. Has also fibrinogenolytic and hemorrhagic activities. The protein is Zinc metalloproteinase-disintegrin-like lachestatin-2 of Lachesis muta rhombeata (Bushmaster).